Here is a 278-residue protein sequence, read N- to C-terminus: Shikimate dehydrogenase (NADP(+)) (278 aa).

Residues S18 to S20 and T65 each bind shikimate. K69 acts as the Proton acceptor in catalysis. E80 contributes to the NADP(+) binding site. Residues N89 and D104 each contribute to the shikimate site. NADP(+)-binding positions include G129–S133 and L218. A shikimate-binding site is contributed by Y220. Residue G241 coordinates NADP(+).

This sequence belongs to the shikimate dehydrogenase family. Homodimer.

It catalyses the reaction shikimate + NADP(+) = 3-dehydroshikimate + NADPH + H(+). Its pathway is metabolic intermediate biosynthesis; chorismate biosynthesis; chorismate from D-erythrose 4-phosphate and phosphoenolpyruvate: step 4/7. Functionally, involved in the biosynthesis of the chorismate, which leads to the biosynthesis of aromatic amino acids. Catalyzes the reversible NADPH linked reduction of 3-dehydroshikimate (DHSA) to yield shikimate (SA). The sequence is that of Shikimate dehydrogenase (NADP(+)) from Rhodopseudomonas palustris (strain TIE-1).